Here is a 61-residue protein sequence, read N- to C-terminus: Large ribosomal subunit protein bL28 (61 aa).

Belongs to the bacterial ribosomal protein bL28 family.

In Geobacillus sp. (strain WCH70), this protein is Large ribosomal subunit protein bL28.